The sequence spans 155 residues: Small ribosomal subunit protein uS7cz/uS7cy (155 aa).

It belongs to the universal ribosomal protein uS7 family. In terms of assembly, part of the 30S ribosomal subunit.

It is found in the plastid. The protein resides in the chloroplast. One of the primary rRNA binding proteins, it binds directly to 16S rRNA where it nucleates assembly of the head domain of the 30S subunit. This Drimys granadensis protein is Small ribosomal subunit protein uS7cz/uS7cy (rps7-A).